Here is a 457-residue protein sequence, read N- to C-terminus: Chromosomal replication initiator protein DnaA (457 aa).

Residues 1 to 90 (MDTNNNIEKE…HSVDVRIEVA (90 aa)) form a domain I, interacts with DnaA modulators region. Residues 91 to 112 (PKIQINAQSNINYKAIKTSVKD) are domain II. Residues 113–323 (SYTFENFVVG…GAIIKISVNA (211 aa)) form a domain III, AAA+ region region. Residues Gly153, Gly155, Lys156, and Thr157 each coordinate ATP. Positions 324–457 (NLMNASIDLN…DKKTAFNSSE (134 aa)) are domain IV, binds dsDNA.

It belongs to the DnaA family. In terms of assembly, oligomerizes as a right-handed, spiral filament on DNA at oriC. Interacts via domain I with HobA. In a crystal with domains I and II of DnaA HobA forms tetramers with DnaA fragments bound at the dimer interface of the tetramer.

It is found in the cytoplasm. The protein localises to the cell inner membrane. Plays an essential role in the initiation and regulation of chromosomal replication. ATP-DnaA binds to the origin of replication (oriC) to initiate formation of the DNA replication initiation complex once per cell cycle. Binds the DnaA box (a 9 base pair repeat at the origin) and separates the double-stranded (ds)DNA. Forms a right-handed helical filament on oriC DNA; dsDNA binds to the exterior of the filament while single-stranded (ss)DNA is stabiized in the filament's interior. The ATP-DnaA-oriC complex binds and stabilizes one strand of the AT-rich DNA unwinding element (DUE), permitting loading of DNA polymerase. After initiation quickly degrades to an ADP-DnaA complex that is not apt for DNA replication. Binds acidic phospholipids. Functionally, the DnaA box is 5'-TTATC[CA]A[CA]A-3' in this bacterium cycle. Multiple discrete DnaA-oriC complexes can be seen as DnaA levels increase. Binding of DnaA to oriC is increased by HobA; some chi-type structures can be seen by electron microscopy. Strand separation requires the DnaA boxes and adjacent DnaA-trio motifs but works equally well with ADP or ATP. The protein is Chromosomal replication initiator protein DnaA of Helicobacter pylori (strain ATCC 700392 / 26695) (Campylobacter pylori).